A 626-amino-acid polypeptide reads, in one-letter code: DNA mismatch repair protein MutL (626 aa).

The tract at residues 352-399 (QPPSPSFTSRPSSAGYASGSWHPAVSSPRTEWSPQTAHPAHRPLDLGA) is disordered. Positions 378 to 387 (SPRTEWSPQT) are enriched in polar residues.

Belongs to the DNA mismatch repair MutL/HexB family.

This protein is involved in the repair of mismatches in DNA. It is required for dam-dependent methyl-directed DNA mismatch repair. May act as a 'molecular matchmaker', a protein that promotes the formation of a stable complex between two or more DNA-binding proteins in an ATP-dependent manner without itself being part of a final effector complex. The protein is DNA mismatch repair protein MutL of Brucella anthropi (strain ATCC 49188 / DSM 6882 / CCUG 24695 / JCM 21032 / LMG 3331 / NBRC 15819 / NCTC 12168 / Alc 37) (Ochrobactrum anthropi).